Consider the following 415-residue polypeptide: 3-isopropylmalate dehydratase large subunit (415 aa).

[4Fe-4S] cluster is bound by residues cysteine 295, cysteine 353, and cysteine 356.

This sequence belongs to the aconitase/IPM isomerase family. LeuC type 2 subfamily. In terms of assembly, heterodimer of LeuC and LeuD. [4Fe-4S] cluster serves as cofactor.

The enzyme catalyses (2R,3S)-3-isopropylmalate = (2S)-2-isopropylmalate. The protein operates within amino-acid biosynthesis; L-leucine biosynthesis; L-leucine from 3-methyl-2-oxobutanoate: step 2/4. In terms of biological role, catalyzes the isomerization between 2-isopropylmalate and 3-isopropylmalate, via the formation of 2-isopropylmaleate. This chain is 3-isopropylmalate dehydratase large subunit, found in Pyrobaculum neutrophilum (strain DSM 2338 / JCM 9278 / NBRC 100436 / V24Sta) (Thermoproteus neutrophilus).